The sequence spans 925 residues: Coronin-7 (925 aa).

4 WD repeats span residues 75–115, 124–163, 166–205, and 209–253; these read CHSD…QALP, PEDL…PLTE, AHGD…RASQ, and AHEN…SALA. The interval 419–461 is disordered; the sequence is VGDADASEGFSSPPSSLTSPSTPSSLGPSLSSTSGIGTSPSLR. A compositionally biased stretch (low complexity) spans 429 to 460; it reads SSPPSSLTSPSTPSSLGPSLSSTSGIGTSPSL. A phosphoserine mark is found at Ser-462 and Ser-465. A Glycyl lysine isopeptide (Lys-Gly) (interchain with G-Cter in ubiquitin) cross-link involves residue Lys-472. 3 WD repeats span residues 542–582, 592–632, and 635–674; these read QNGA…LEEV, GHTE…DRLK, and GHQD…EPLQ. Lys-680 is covalently cross-linked (Glycyl lysine isopeptide (Lys-Gly) (interchain with G-Cter in ubiquitin)). Residues 728 to 768 form a WD 8 repeat; that stretch reads DVAPSTLLPSYDPDTGLVLLTGKGDTRVFLYELLPESPFFL. The tract at residues 858–925 is disordered; the sequence is QPPDMSPVSQ…FEGVDEDEWD (68 aa). Residues 866 to 882 show a composition bias toward low complexity; it reads SQAPREAPARRAPSSAQ. The segment covering 884-896 has biased composition (basic and acidic residues); that stretch reads LEEKSDQQKKEEL. Ser-915 bears the Phosphoserine mark.

It belongs to the WD repeat coronin family. In terms of assembly, interacts with clathrin adapter AP1 complex. This interaction takes place at Golgi membranes and not AP1-positive endosomal membranes. Interacts (when ubiquitinated at Lys-472) with EPS15. Post-translationally, the membrane-associated form is phosphorylated on tyrosine residues. Ubiquitinated via 'Lys-33'-linked ubiquitin chains by the BCR(KLHL20) E3 ubiquitin ligase complex: 'Lys-33'-linked ubiquitination promotes interaction with EPS15 and facilitates actin polymerization at the trans-Golgi network, thereby facilitating post-Golgi trafficking. Deubiquitinated by ZRANB1/TRABID. Widely expressed. Expressed in the spleen, peripheral leukocytes, testes, brain, thymus and small intestine.

It is found in the golgi apparatus membrane. The protein localises to the golgi apparatus. It localises to the trans-Golgi network. The protein resides in the cytoplasmic vesicle. Its subcellular location is the cytoplasm. It is found in the cytosol. Functionally, F-actin regulator involved in anterograde Golgi to endosome transport: upon ubiquitination via 'Lys-33'-linked ubiquitin chains by the BCR(KLHL20) E3 ubiquitin ligase complex, interacts with EPS15 and localizes to the trans-Golgi network, where it promotes actin polymerization, thereby facilitating post-Golgi trafficking. May play a role in the maintenance of the Golgi apparatus morphology. The sequence is that of Coronin-7 (CORO7) from Homo sapiens (Human).